The primary structure comprises 333 residues: N-acetyl-gamma-glutamyl-phosphate reductase (333 aa).

The active site involves C136.

This sequence belongs to the NAGSA dehydrogenase family. Type 1 subfamily.

Its subcellular location is the cytoplasm. The enzyme catalyses N-acetyl-L-glutamate 5-semialdehyde + phosphate + NADP(+) = N-acetyl-L-glutamyl 5-phosphate + NADPH + H(+). Its pathway is amino-acid biosynthesis; L-arginine biosynthesis; N(2)-acetyl-L-ornithine from L-glutamate: step 3/4. In terms of biological role, catalyzes the NADPH-dependent reduction of N-acetyl-5-glutamyl phosphate to yield N-acetyl-L-glutamate 5-semialdehyde. This is N-acetyl-gamma-glutamyl-phosphate reductase from Xylella fastidiosa (strain 9a5c).